A 361-amino-acid chain; its full sequence is Phenylalanine--tRNA ligase alpha subunit (361 aa).

Residue Glu260 participates in Mg(2+) binding.

Belongs to the class-II aminoacyl-tRNA synthetase family. Phe-tRNA synthetase alpha subunit type 1 subfamily. In terms of assembly, tetramer of two alpha and two beta subunits. The cofactor is Mg(2+).

The protein localises to the cytoplasm. It catalyses the reaction tRNA(Phe) + L-phenylalanine + ATP = L-phenylalanyl-tRNA(Phe) + AMP + diphosphate + H(+). This is Phenylalanine--tRNA ligase alpha subunit from Allorhizobium ampelinum (strain ATCC BAA-846 / DSM 112012 / S4) (Agrobacterium vitis (strain S4)).